Here is a 159-residue protein sequence, read N- to C-terminus: Putative phosphatidylinositol-3-phosphatase (159 aa).

The signal sequence occupies residues M1–G16. Transmembrane regions (helical) follow at residues L30–W50, A54–W74, W104–V124, and V134–A154.

Its subcellular location is the membrane. The enzyme catalyses a 1,2-diacyl-sn-glycero-3-phospho-(1D-myo-inositol-3-phosphate) + H2O = a 1,2-diacyl-sn-glycero-3-phospho-(1D-myo-inositol) + phosphate. Its function is as follows. May be responsible for the conversion of phosphatidylinositol phosphate diacylglycerol (PIP-DAG) to phosphatidylinositol diacylglycerol (PI-DAG), making it a key enzyme in the inositol glycerophospholipid biosynthesis pathway. The polypeptide is Putative phosphatidylinositol-3-phosphatase (Bacteroides thetaiotaomicron (strain ATCC 29148 / DSM 2079 / JCM 5827 / CCUG 10774 / NCTC 10582 / VPI-5482 / E50)).